A 255-amino-acid chain; its full sequence is Adenylate dimethylallyltransferase (255 aa).

Belongs to the isopentenyl transferase family.

It carries out the reaction dimethylallyl diphosphate + AMP = N(6)-(dimethylallyl)adenosine 5'-phosphate + diphosphate. Functionally, transfers dimethylallyl groups to AMP as part of the biosynthesis of cytokinin phytohormones. The sequence is that of Adenylate dimethylallyltransferase (fas4) from Rhodococcoides fascians (Rhodococcus fascians).